A 276-amino-acid chain; its full sequence is Undecaprenyl-diphosphatase 1 (276 aa).

8 helical membrane passes run 1 to 21, 44 to 64, 87 to 107, 114 to 134, 150 to 170, 190 to 210, 222 to 242, and 251 to 271; these read MSLW…LFPV, QLLP…LWYF, GHLM…GLLL, VFHD…LLWL, LTFK…IPGF, AAEF…LLEL, DALL…RFLM, and LASF…WFMF.

The protein belongs to the UppP family.

Its subcellular location is the cell inner membrane. It carries out the reaction di-trans,octa-cis-undecaprenyl diphosphate + H2O = di-trans,octa-cis-undecaprenyl phosphate + phosphate + H(+). Its function is as follows. Catalyzes the dephosphorylation of undecaprenyl diphosphate (UPP). Confers resistance to bacitracin. This chain is Undecaprenyl-diphosphatase 1, found in Burkholderia pseudomallei (strain 1106a).